Here is a 702-residue protein sequence, read N- to C-terminus: Phosphate acetyltransferase (702 aa).

The phosphate acetyltransferase stretch occupies residues 375-702; that stretch reads AFRYELIQRA…QATQSAADCG (328 aa).

This sequence in the N-terminal section; belongs to the CobB/CobQ family. The protein in the C-terminal section; belongs to the phosphate acetyltransferase and butyryltransferase family. As to quaternary structure, homohexamer.

The protein resides in the cytoplasm. It catalyses the reaction acetyl-CoA + phosphate = acetyl phosphate + CoA. It participates in metabolic intermediate biosynthesis; acetyl-CoA biosynthesis; acetyl-CoA from acetate: step 2/2. Functionally, involved in acetate metabolism. This is Phosphate acetyltransferase (pta) from Deinococcus radiodurans (strain ATCC 13939 / DSM 20539 / JCM 16871 / CCUG 27074 / LMG 4051 / NBRC 15346 / NCIMB 9279 / VKM B-1422 / R1).